The primary structure comprises 529 residues: Probable DNA helicase MPN_340 (529 aa).

Positions 2–285 constitute a UvrD-like helicase ATP-binding domain; that stretch reads EHLNQEQKAA…FYTTQNYRSI (284 aa). An ATP-binding site is contributed by 23-30; sequence SGAGTGKT.

It belongs to the helicase family. UvrD subfamily.

The enzyme catalyses Couples ATP hydrolysis with the unwinding of duplex DNA by translocating in the 3'-5' direction.. It catalyses the reaction ATP + H2O = ADP + phosphate + H(+). The chain is Probable DNA helicase MPN_340 from Mycoplasma pneumoniae (strain ATCC 29342 / M129 / Subtype 1) (Mycoplasmoides pneumoniae).